The primary structure comprises 525 residues: Chromaffin granule amine transporter (525 aa).

The Cytoplasmic portion of the chain corresponds to 1-21; that stretch reads MLRTILDAPQRLLKEGRASRQ. The chain crosses the membrane as a helical span at residues 22-42; that stretch reads LVLVVVFVALLLDNMLFTVVV. Over 43–138 the chain is Lumenal, vesicle; the sequence is PIVPTFLYDM…TGFLEEEITR (96 aa). N-linked (GlcNAc...) asparagine glycans are attached at residues Asn-58, Asn-87, and Asn-104. The helical transmembrane segment at 139–158 threads the bilayer; sequence VGVLFASKAVMQLLVNPFVG. The Cytoplasmic portion of the chain corresponds to 159 to 167; the sequence is PLTNRIGYH. Residues 168–188 traverse the membrane as a helical segment; it reads IPMFAGFVIMFLSTVMFAFSG. Topologically, residues 189–197 are lumenal, vesicle; it reads TYTLLFVAR. Residues 198-218 traverse the membrane as a helical segment; the sequence is TLQGIGSSFSSVAGLGMLASV. The Cytoplasmic portion of the chain corresponds to 219–227; the sequence is YTDDHERGR. The chain crosses the membrane as a helical span at residues 228-250; the sequence is AMGTALGGLALGLLVGAPFGSVM. The Lumenal, vesicle portion of the chain corresponds to 251–256; it reads YEFVGK. A helical membrane pass occupies residues 257 to 279; that stretch reads SAPFLILAFLALLDGALQLCILQ. Residues 280–299 are Cytoplasmic-facing; it reads PSKVSPESAKGTPLFMLLKD. Residues 300–319 traverse the membrane as a helical segment; it reads PYILVAAGSICFANMGVAIL. The Lumenal, vesicle segment spans residues 320-335; sequence EPTLPIWMMQTMCSPK. A helical membrane pass occupies residues 336 to 360; sequence WQLGLAFLPASVSYLIGTNLFGVLA. Over 361-365 the chain is Cytoplasmic; sequence NKMGR. The helical transmembrane segment at 366-386 threads the bilayer; sequence WLCSLIGMLVVGTSLLCVPLA. The Lumenal, vesicle portion of the chain corresponds to 387-397; sequence HNIFGLIGPNA. A helical membrane pass occupies residues 398-418; that stretch reads GLGLAIGMVDSSMMPIMGHLV. Over 419–422 the chain is Cytoplasmic; the sequence is DLRH. A helical membrane pass occupies residues 423–443; it reads TSVYGSVYAIADVAFCMGFAI. Residues 444-448 lie on the Lumenal, vesicle side of the membrane; that stretch reads GPSTG. Residues 449 to 470 form a helical membrane-spanning segment; it reads GAIVKAIGFPWLMVITGVINIV. Over 471–525 the chain is Cytoplasmic; that stretch reads YAPLCYYLRSPPAKEEKLAILSQDCPMETRMYATQKPTKEFPLGEDSDEEPDHEE. A disordered region spans residues 503–525; it reads ATQKPTKEFPLGEDSDEEPDHEE. The segment covering 513–525 has biased composition (acidic residues); it reads LGEDSDEEPDHEE.

Belongs to the major facilitator superfamily. Vesicular transporter family. In terms of tissue distribution, expressed primarily in neuroendocrine tissues. Highly expressed in chromaffin cells of the adrenal medulla (at protein level). Detected in peripheral sympathetic ganglia (at protein level). Found in some paracrine cells in stomach and duodenum (at protein level). Expressed in substantia nigra. Expressed in gastrointestinal tract.

It is found in the cytoplasmic vesicle. It localises to the secretory vesicle membrane. The protein localises to the secretory vesicle. Its subcellular location is the synaptic vesicle membrane. The protein resides in the endoplasmic reticulum membrane. The enzyme catalyses serotonin(in) + 2 H(+)(out) = serotonin(out) + 2 H(+)(in). It catalyses the reaction (R)-noradrenaline(in) + 2 H(+)(out) = (R)-noradrenaline(out) + 2 H(+)(in). The catalysed reaction is dopamine(in) + 2 H(+)(out) = dopamine(out) + 2 H(+)(in). Strongly inhibited by reserpine. Also inhibited to a lesser extent by ketanserin and fenfluramine. Not significantly inhibited by tetrabenazine. In terms of biological role, electrogenic antiporter that exchanges one cationic monoamine with two intravesicular protons across the membrane of secretory and synaptic vesicles. Uses the electrochemical proton gradient established by the V-type proton-pump ATPase to accumulate high concentrations of monoamines inside the vesicles prior to their release via exocytosis. Transports catecholamines and indolamines with higher affinity for serotonin. Regulates the transvesicular monoaminergic gradient that determines the quantal size. Mediates presynaptic monoaminergic vesicle transport in the amygdala and prefrontal brain regions related with emotion processing in response to environmental stimuli. Its function is as follows. Unable to uptake serotonin. The protein is Chromaffin granule amine transporter (SLC18A1) of Homo sapiens (Human).